Here is a 97-residue protein sequence, read N- to C-terminus: Small integral membrane protein 8 (97 aa).

The disordered stretch occupies residues 1 to 24; it reads MSSAPEPPTFKKEPPKEKEFQSPG. Residues 9–20 are compositionally biased toward basic and acidic residues; it reads TFKKEPPKEKEF. The helical transmembrane segment at 48 to 70 threads the bilayer; the sequence is PVMAFGLVTLSLCVAYIGYLHAI.

It belongs to the SMIM8 family.

It is found in the membrane. In Homo sapiens (Human), this protein is Small integral membrane protein 8 (SMIM8).